Consider the following 214-residue polypeptide: Ribosomal RNA small subunit methyltransferase G (214 aa).

S-adenosyl-L-methionine-binding positions include Gly-81, Met-86, 132 to 133 (VE), and Arg-147.

Belongs to the methyltransferase superfamily. RNA methyltransferase RsmG family.

It localises to the cytoplasm. The catalysed reaction is guanosine(527) in 16S rRNA + S-adenosyl-L-methionine = N(7)-methylguanosine(527) in 16S rRNA + S-adenosyl-L-homocysteine. In terms of biological role, specifically methylates the N7 position of guanine in position 527 of 16S rRNA. The protein is Ribosomal RNA small subunit methyltransferase G of Pseudomonas fluorescens (strain Pf0-1).